Consider the following 620-residue polypeptide: Estrogen receptor (620 aa).

2 stretches are compositionally biased toward polar residues: residues 1–10 (MSKRQSSVQI) and 101–111 (GSLQSLGSGPT). Disordered regions lie at residues 1–55 (MSKR…RGSG) and 88–111 (YSAP…SGPT). A modulating region spans residues 1–185 (MSKRQSSVQI…GFEMAKDTRF (185 aa)). 2 NR C4-type zinc fingers span residues 186–206 (CAVC…CEGC) and 222–246 (CPAT…LRKC). Positions 186-251 (CAVCSDYASG…RLRKCYEVGM (66 aa)) form a DNA-binding region, nuclear receptor. Positions 252-314 (MKGGVRKDRI…GGGRLSVTSI (63 aa)) are hinge. Positions 286–308 (KTVHYDGRKRSSTGGGGGGGGGR) are disordered. Over residues 298 to 308 (TGGGGGGGGGR) the composition is skewed to gly residues. The region spanning 315-551 (PPEQVLLLLQ…DLLLEMLDAH (237 aa)) is the NR LBD domain. Residues 558-620 (RAPQSLSQVD…RPDCTPALQD (63 aa)) form a disordered region.

The protein belongs to the nuclear hormone receptor family. NR3 subfamily. Binds DNA as a homodimer. Can form a heterodimer with ER-beta. In terms of tissue distribution, widely expressed in brain, ovary, testis, and female liver.

Its subcellular location is the nucleus. Its function is as follows. The steroid hormones and their receptors are involved in the regulation of eukaryotic gene expression and affect cellular proliferation and differentiation in target tissues. The sequence is that of Estrogen receptor (esr1) from Oryzias latipes (Japanese rice fish).